The primary structure comprises 274 residues: tRNA pseudouridine synthase A (274 aa).

Residue Asp51 is the Nucleophile of the active site. Position 109 (Tyr109) interacts with substrate.

The protein belongs to the tRNA pseudouridine synthase TruA family. In terms of assembly, homodimer.

It catalyses the reaction uridine(38/39/40) in tRNA = pseudouridine(38/39/40) in tRNA. In terms of biological role, formation of pseudouridine at positions 38, 39 and 40 in the anticodon stem and loop of transfer RNAs. The chain is tRNA pseudouridine synthase A from Acidovorax ebreus (strain TPSY) (Diaphorobacter sp. (strain TPSY)).